The sequence spans 443 residues: D(2) dopamine receptor (443 aa).

Residues 1 to 37 (MDPLNLSWYDDDPESRNWSRPFNGSEGKVGKPHYNYY) are Extracellular-facing. 3 N-linked (GlcNAc...) asparagine glycosylation sites follow: Asn5, Asn17, and Asn23. The helical transmembrane segment at 38-60 (AMLLTLLIFVIVFGNVLVCMAVS) threads the bilayer. The Cytoplasmic portion of the chain corresponds to 61-70 (REKALQTTTN). Residues 71–93 (YLIVSLAVADLLVATLVMPWVVY) form a helical membrane-spanning segment. Residues 94–108 (LEVVGEWKFSRIHCD) lie on the Extracellular side of the membrane. A disulfide bridge connects residues Cys107 and Cys182. A helical membrane pass occupies residues 109–130 (IFVTLDVMMCTASILNLCAISI). Over 131-151 (DRYTAVAMPMLYNTRYSSKRR) the chain is Cytoplasmic. A helical transmembrane segment spans residues 152 to 172 (VTVMIAIVWVLSFTISCPLLF). The Extracellular segment spans residues 173–188 (GLNNTDQNECIIANPA). The chain crosses the membrane as a helical span at residues 189 to 213 (FVVYSSVVSFYVPFIVTLLVYIKIY). The interaction with PPP1R9B stretch occupies residues 211–373 (KIYIVLRRRR…SQQKEKKATQ (163 aa)). At 214–373 (IVLRRRRKRV…SQQKEKKATQ (160 aa)) the chain is on the cytoplasmic side. A disordered region spans residues 282-331 (EMLSSTSPPERTRYSPIPPSHHQLTLPDPSHHGLHSTANSPVKPEKNGHA). A helical transmembrane segment spans residues 374-395 (MLAIVLGVFIICWLPFFITHIL). Topologically, residues 396-409 (NIHCDCNIPPVLYS) are extracellular. Cysteines 399 and 401 form a disulfide. The helical transmembrane segment at 410–431 (AFTWLGYVNSAVNPIIYTTFNV) threads the bilayer. Residues 432–443 (EFRKAFMKILHC) are Cytoplasmic-facing. A lipid anchor (S-palmitoyl cysteine) is attached at Cys443.

Belongs to the G-protein coupled receptor 1 family. In terms of assembly, forms homo- and heterooligomers with DRD4. The interaction with DRD4 may modulate agonist-induced downstream signaling. Interacts with CADPS and CADPS2. Interacts with GPRASP1, PPP1R9B and CLIC6. Interacts with ARRB2. Interacts with HTR2A. Interacts with DRD1. Interacts with KCNA2. Post-translationally, palmitoylated. Palmitoylation which is required for proper localization to the plasma membrane and stability of the receptor could be carried on by ZDHHC4, ZDHHC3 and ZDHHC8.

It is found in the cell membrane. The protein localises to the golgi apparatus membrane. Its function is as follows. Dopamine receptor whose activity is mediated by G proteins which inhibit adenylyl cyclase. Positively regulates postnatal regression of retinal hyaloid vessels via suppression of VEGFR2/KDR activity, downstream of OPN5. The polypeptide is D(2) dopamine receptor (DRD2) (Mustela putorius furo (European domestic ferret)).